Consider the following 149-residue polypeptide: Transcriptional repressor NrdR (149 aa).

Residues 3 to 34 (CPFCSATDTKVIDSRLVAEGHQVRRRRECTEC) fold into a zinc finger. One can recognise an ATP-cone domain in the interval 49–139 (PRVIKRDGTR…VYRAFEDVSE (91 aa)).

This sequence belongs to the NrdR family. Requires Zn(2+) as cofactor.

Functionally, negatively regulates transcription of bacterial ribonucleotide reductase nrd genes and operons by binding to NrdR-boxes. The sequence is that of Transcriptional repressor NrdR from Shewanella sp. (strain MR-4).